Reading from the N-terminus, the 86-residue chain is ATP synthase epsilon chain (86 aa).

Belongs to the ATPase epsilon chain family. In terms of assembly, F-type ATPases have 2 components, CF(1) - the catalytic core - and CF(0) - the membrane proton channel. CF(1) has five subunits: alpha(3), beta(3), gamma(1), delta(1), epsilon(1). CF(0) has three main subunits: a, b and c.

It localises to the cell inner membrane. Its function is as follows. Produces ATP from ADP in the presence of a proton gradient across the membrane. The chain is ATP synthase epsilon chain (atpC) from Caulobacter vibrioides (strain ATCC 19089 / CIP 103742 / CB 15) (Caulobacter crescentus).